A 175-amino-acid chain; its full sequence is Cuticle protein CP1876 (175 aa).

As to expression, calcified shell.

The protein is Cuticle protein CP1876 of Cancer pagurus (Rock crab).